A 204-amino-acid polypeptide reads, in one-letter code: Molybdenum cofactor guanylyltransferase (204 aa).

GTP contacts are provided by residues 10–12 (LAG), lysine 23, asparagine 51, aspartate 69, and aspartate 99. A Mg(2+)-binding site is contributed by aspartate 99.

It belongs to the MobA family. Monomer. Mg(2+) serves as cofactor.

Its subcellular location is the cytoplasm. The enzyme catalyses Mo-molybdopterin + GTP + H(+) = Mo-molybdopterin guanine dinucleotide + diphosphate. In terms of biological role, transfers a GMP moiety from GTP to Mo-molybdopterin (Mo-MPT) cofactor (Moco or molybdenum cofactor) to form Mo-molybdopterin guanine dinucleotide (Mo-MGD) cofactor. The chain is Molybdenum cofactor guanylyltransferase from Shewanella piezotolerans (strain WP3 / JCM 13877).